A 432-amino-acid chain; its full sequence is UDP-N-acetylglucosamine 1-carboxyvinyltransferase (432 aa).

Position 22–23 (22–23) interacts with phosphoenolpyruvate; that stretch reads KN. Position 92 (Arg92) interacts with UDP-N-acetyl-alpha-D-glucosamine. The active-site Proton donor is Cys116. 2-(S-cysteinyl)pyruvic acid O-phosphothioketal is present on Cys116. Residues 121 to 125, Asp307, and Ile329 contribute to the UDP-N-acetyl-alpha-D-glucosamine site; that span reads RPVDQ.

The protein belongs to the EPSP synthase family. MurA subfamily.

The protein localises to the cytoplasm. The catalysed reaction is phosphoenolpyruvate + UDP-N-acetyl-alpha-D-glucosamine = UDP-N-acetyl-3-O-(1-carboxyvinyl)-alpha-D-glucosamine + phosphate. Its pathway is cell wall biogenesis; peptidoglycan biosynthesis. Its function is as follows. Cell wall formation. Adds enolpyruvyl to UDP-N-acetylglucosamine. This chain is UDP-N-acetylglucosamine 1-carboxyvinyltransferase, found in Psychrobacter sp. (strain PRwf-1).